We begin with the raw amino-acid sequence, 757 residues long: 5-methyltetrahydropteroyltriglutamate--homocysteine methyltransferase (757 aa).

5-methyltetrahydropteroyltri-L-glutamate contacts are provided by residues 17–20 and Lys-115; that span reads RELK. Residues 430 to 432 and Glu-483 contribute to the L-homocysteine site; that span reads IGS. L-methionine contacts are provided by residues 430 to 432 and Glu-483; that span reads IGS. 5-methyltetrahydropteroyltri-L-glutamate is bound by residues 514–515 and Trp-560; that span reads RC. Asp-598 serves as a coordination point for L-homocysteine. Asp-598 contacts L-methionine. Glu-604 lines the 5-methyltetrahydropteroyltri-L-glutamate pocket. Residues His-640, Cys-642, and Glu-664 each coordinate Zn(2+). His-693 functions as the Proton donor in the catalytic mechanism. Position 725 (Cys-725) interacts with Zn(2+).

This sequence belongs to the vitamin-B12 independent methionine synthase family. Requires Zn(2+) as cofactor.

The enzyme catalyses 5-methyltetrahydropteroyltri-L-glutamate + L-homocysteine = tetrahydropteroyltri-L-glutamate + L-methionine. Its pathway is amino-acid biosynthesis; L-methionine biosynthesis via de novo pathway; L-methionine from L-homocysteine (MetE route): step 1/1. Functionally, catalyzes the transfer of a methyl group from 5-methyltetrahydrofolate to homocysteine resulting in methionine formation. This Buchnera aphidicola subsp. Schizaphis graminum (strain Sg) protein is 5-methyltetrahydropteroyltriglutamate--homocysteine methyltransferase.